A 206-amino-acid polypeptide reads, in one-letter code: Thymidylate kinase (206 aa).

Residue 10–17 (GVDGVGKT) coordinates ATP.

It belongs to the thymidylate kinase family.

The catalysed reaction is dTMP + ATP = dTDP + ADP. Phosphorylation of dTMP to form dTDP in both de novo and salvage pathways of dTTP synthesis. The sequence is that of Thymidylate kinase from Bifidobacterium longum (strain DJO10A).